Consider the following 302-residue polypeptide: Troponin T, cardiac muscle isoforms (302 aa).

Over residues 1–55 (MSDSEEVVEEYEQEQEEEYVEEEEEEWLEEDDGQEDQVDEEEEETEETTAEEQED) the composition is skewed to acidic residues. 3 disordered regions span residues 1–99 (MSDS…GERL), 138–230 (KDRI…RKPL), and 280–302 (SDHQKVKGSKAARGKTMVGGRWK). Serine 2 bears the N-acetylserine mark. Residue serine 2 is modified to Phosphoserine; by CK2. The segment covering 65–79 (EGDREQEPGEGESKP) has biased composition (basic and acidic residues). Pro residues predominate over residues 82 to 93 (KPFMPNLVPPKI). 2 stretches are compositionally biased toward basic and acidic residues: residues 138–186 (KDRI…EKEA) and 204–230 (KSEKKGGKKQTEREKKKKILSERRKPL).

The protein belongs to the troponin T family.

Its function is as follows. Troponin T is the tropomyosin-binding subunit of troponin, the thin filament regulatory complex which confers calcium-sensitivity to striated muscle actomyosin ATPase activity. The polypeptide is Troponin T, cardiac muscle isoforms (TNNT2) (Gallus gallus (Chicken)).